We begin with the raw amino-acid sequence, 345 residues long: Protein RecA (345 aa).

65 to 72 provides a ligand contact to ATP; the sequence is GPESSGKT.

It belongs to the RecA family.

It is found in the cytoplasm. Can catalyze the hydrolysis of ATP in the presence of single-stranded DNA, the ATP-dependent uptake of single-stranded DNA by duplex DNA, and the ATP-dependent hybridization of homologous single-stranded DNAs. It interacts with LexA causing its activation and leading to its autocatalytic cleavage. This chain is Protein RecA, found in Sulfurimonas denitrificans (strain ATCC 33889 / DSM 1251) (Thiomicrospira denitrificans (strain ATCC 33889 / DSM 1251)).